Consider the following 935-residue polypeptide: Dual 3',5'-cyclic-AMP and -GMP phosphodiesterase 11A (935 aa).

A disordered region spans residues 41–125 (RHSSGQGASD…ASQKELRKSF (85 aa)). Residues 54-69 (ALAGASSLAQSSARGS) show a composition bias toward low complexity. 3 positions are modified to phosphoserine: S162, S163, and S239. GAF domains lie at 217 to 370 (DLTS…GIAI) and 402 to 558 (DLEK…GLGI). 3',5'-cyclic GMP is bound at residue S424. Residues 588 to 912 (SKAEVDKFKA…RKWEELHQKR (325 aa)) enclose the PDEase domain. H664 functions as the Proton donor in the catalytic mechanism. H668, H704, D705, and D816 together coordinate a divalent metal cation. The tract at residues 915-935 (VSAASPVPSSPSPAVAGEDRL) is disordered.

This sequence belongs to the cyclic nucleotide phosphodiesterase family. The cofactor is a divalent metal cation. As to expression, isoform 1 is expressed in brain, heart, kidney and liver, but not in prostate. Isoform 2 is specifically expressed in testis. Isoform 3 is expressed in various tissues including brain, lung, skeletal muscle, spleen, testis and prostate.

The protein resides in the cytoplasm. Its subcellular location is the cytosol. The enzyme catalyses 3',5'-cyclic GMP + H2O = GMP + H(+). It catalyses the reaction 3',5'-cyclic AMP + H2O = AMP + H(+). Its activity is regulated as follows. Inhibited by 3-isobutyl-1-methylxanthine (IBMX), zaprinast and dipyridamole. cGMP acts as an allosteric activator. Functionally, plays a role in signal transduction by regulating the intracellular concentration of cyclic nucleotides cAMP and cGMP. Catalyzes the hydrolysis of both cAMP and cGMP to 5'-AMP and 5'-GMP, respectively. In Rattus norvegicus (Rat), this protein is Dual 3',5'-cyclic-AMP and -GMP phosphodiesterase 11A.